A 444-amino-acid polypeptide reads, in one-letter code: Methylenetetrahydrofolate--tRNA-(uracil-5-)-methyltransferase TrmFO (444 aa).

10 to 15 contacts FAD; that stretch reads GAGLAG.

This sequence belongs to the MnmG family. TrmFO subfamily. FAD is required as a cofactor.

Its subcellular location is the cytoplasm. The enzyme catalyses uridine(54) in tRNA + (6R)-5,10-methylene-5,6,7,8-tetrahydrofolate + NADH + H(+) = 5-methyluridine(54) in tRNA + (6S)-5,6,7,8-tetrahydrofolate + NAD(+). It carries out the reaction uridine(54) in tRNA + (6R)-5,10-methylene-5,6,7,8-tetrahydrofolate + NADPH + H(+) = 5-methyluridine(54) in tRNA + (6S)-5,6,7,8-tetrahydrofolate + NADP(+). Catalyzes the folate-dependent formation of 5-methyl-uridine at position 54 (M-5-U54) in all tRNAs. The polypeptide is Methylenetetrahydrofolate--tRNA-(uracil-5-)-methyltransferase TrmFO (Streptococcus pneumoniae (strain 70585)).